A 522-amino-acid polypeptide reads, in one-letter code: Transactivator/viroplasmin protein (522 aa).

Positions 488–522 are disordered; the sequence is DASADEGTTDKSGPPPTRSIVEKEDVPNTSSKQVD.

This sequence belongs to the caulimoviridae viroplasmin family.

It localises to the host cytoplasm. In terms of biological role, enhances the ribosomal termination-reinitiation event leading to the translation of major open reading frames on the polycistronic viral RNAs. The sequence is that of Transactivator/viroplasmin protein from Cauliflower mosaic virus (strain D/H) (CaMV).